The sequence spans 221 residues: Small ribosomal subunit protein uS3c (221 aa).

Residues 43–121 enclose the KH type-2 domain; sequence IQNYIQKNMR…KLKIAITKIA (79 aa).

It belongs to the universal ribosomal protein uS3 family. Part of the 30S ribosomal subunit.

Its subcellular location is the plastid. The protein localises to the chloroplast. The protein is Small ribosomal subunit protein uS3c (rps3) of Jasminum nudiflorum (Winter jasmine).